We begin with the raw amino-acid sequence, 239 residues long: Fatty acid metabolism regulator protein (239 aa).

Residues 6–74 form the HTH gntR-type domain; the sequence is QSPAGFAEEY…HGKPTKVNNF (69 aa). A DNA-binding region (H-T-H motif) is located at residues 34 to 53; that stretch reads ERELSELIGVTRTTLREVLQ.

In terms of assembly, homodimer.

It localises to the cytoplasm. In terms of biological role, multifunctional regulator of fatty acid metabolism. The protein is Fatty acid metabolism regulator protein of Serratia proteamaculans (strain 568).